A 377-amino-acid chain; its full sequence is Citrate synthase (377 aa).

Active-site residues include His-220, His-259, and Asp-313.

Belongs to the citrate synthase family. In terms of assembly, homodimer.

The catalysed reaction is oxaloacetate + acetyl-CoA + H2O = citrate + CoA + H(+). Its pathway is carbohydrate metabolism; tricarboxylic acid cycle; isocitrate from oxaloacetate: step 1/2. Might regulate the synthesis and function of enzymes involved in later enzymatic steps of Krebs cycle. Loss in activity results in sporulation defect. This Deinococcus radiodurans (strain ATCC 13939 / DSM 20539 / JCM 16871 / CCUG 27074 / LMG 4051 / NBRC 15346 / NCIMB 9279 / VKM B-1422 / R1) protein is Citrate synthase (gltA).